The chain runs to 1304 residues: MKNSSVKHTLTPLQQSLFSQLNDIMLVDQRRLSARIHGIGKIKSQEAQQAVAAEIQQQIEQARLRVEQRKSAVQNPIVFPESLPVSQRKVEIQKLISEHQVIVVAGETGSGKTTQLPKMCLELGFGNLGMIGHTQPRRIAARSVAARIAEELETELGGLVGYKVRFNDQISDNTQIKLMTDGILLAEIQNDRFLNQYSCLIIDEAHERSLNNDFILGYLKQLLPRRRRDLKLIITSATIDVERFSKHFNNAPIIEVSGRTYPVEVRYRPVVEEDDQDQLQGILNAVDELQAEGRGDILIFMNGEREIRDTAEALQKQNLKHTEILPLFARLSAQEQNKIFHPSGLNRIVLATNVAETSLTVPSIKYVIDPGTARISRYSYRTKVQRLPIEPISQASANQRKGRCGRVSEGICIRLYSEEDFNSRPEFTDPEILRTNLASVILQMTALGLDDIEAFPFVDAPDERHIQDGVKLLEELGAFETVQTKSGEKRLLTRVGRQLAQLPVDPRLAKMILSAVNFGCVYEMMIIVSALSIQDPRERPQEKQQASDEKHRRFADKKSDFLAFLNLWRYLQEQQKESSKNQFRRQCQKDFLNYLRIREWQDIYHQIRLTVREMSLPINSEKAEYQQIHTALLSGLLSHIGLKEAEKQQYLGARNAHFAIFPNSVLFKKQPKWVMAAELVETSKLWGRMVAEIEPEWIEPLAEHLIKKSYSVPLWSKSRGAVIADEKVTLYGVPIVAVRPVNYGAIDPTVSREIFIQSALVEGGWNTKHKFFKENQRLVREVEELEHKSRRRDILVDDRTLFEFYDQRIGTEVVSQKHFDTWWKKAQQKDPELLNFEHSFLINDDAEQVSKLDFPNFWHQGNLKLKLTYQFEPGTDADGVTVHIPLPLLNQVEMTGFDWQIPGLREELVIALIKSLPKSYRRNFVPAPNYAQAFLSRAVPLEKPLLDTLIYELRRMTGVTVEAEHWNWEQIPSHLKMTFRVVDENGKKIAESMNLDELKFNLKDRVQESISAVADDGIEQSGLHIWSFADLPQCYEQKQRGFSVKAFPAIVDEKDAVGIKLFETEFEQSVAMQQGLRRLLLLNVPSPIKYLHEKLPNKAKLGLYFTPFGRVLDLIDDCIACAVDKLIADFGGFVWDEAGFEKLRDFVRENLNEVTVDIAQKVEQILTLTYQLNQRLKGKMDFTMAFALSDIKSQLAGLVYQGFVQKSGYDRLPDLQRYLQAVDKRIDKLAQDVNRDRAAMLRVEQVQQAYQQLLAKLPKSKPISDEVAEIRYMIEELRVSLFAQQLGTKYQISDKRIGNIISQY.

In terms of domain architecture, Helicase ATP-binding spans 93–257; sequence QKLISEHQVI…FNNAPIIEVS (165 aa). An ATP-binding site is contributed by 106–113; sequence GETGSGKT. The DEAH box signature appears at 203 to 206; sequence DEAH. Residues 281–448 form the Helicase C-terminal domain; the sequence is GILNAVDELQ…SVILQMTALG (168 aa).

Belongs to the DEAD box helicase family. DEAH subfamily.

It catalyses the reaction ATP + H2O = ADP + phosphate + H(+). The protein is ATP-dependent RNA helicase HrpA homolog (hrpA) of Haemophilus influenzae (strain ATCC 51907 / DSM 11121 / KW20 / Rd).